The primary structure comprises 469 residues: Sulfate adenylyltransferase subunit 1 (469 aa).

One can recognise a tr-type G domain in the interval lysine 22 to aspartate 236. A G1 region spans residues glycine 31 to serine 38. GTP is bound at residue glycine 31–serine 38. The G2 stretch occupies residues glycine 89 to aspartate 93. Residues aspartate 110 to glycine 113 form a G3 region. GTP is bound by residues aspartate 110–histidine 114 and asparagine 165–aspartate 168. A G4 region spans residues asparagine 165–aspartate 168. The interval serine 202–leucine 204 is G5.

The protein belongs to the TRAFAC class translation factor GTPase superfamily. Classic translation factor GTPase family. CysN/NodQ subfamily. In terms of assembly, heterodimer composed of CysD, the smaller subunit, and CysN.

The enzyme catalyses sulfate + ATP + H(+) = adenosine 5'-phosphosulfate + diphosphate. It functions in the pathway sulfur metabolism; hydrogen sulfide biosynthesis; sulfite from sulfate: step 1/3. Functionally, with CysD forms the ATP sulfurylase (ATPS) that catalyzes the adenylation of sulfate producing adenosine 5'-phosphosulfate (APS) and diphosphate, the first enzymatic step in sulfur assimilation pathway. APS synthesis involves the formation of a high-energy phosphoric-sulfuric acid anhydride bond driven by GTP hydrolysis by CysN coupled to ATP hydrolysis by CysD. This Shewanella woodyi (strain ATCC 51908 / MS32) protein is Sulfate adenylyltransferase subunit 1.